A 436-amino-acid chain; its full sequence is GTPase Der (436 aa).

2 EngA-type G domains span residues 4-167 and 176-351; these read PVVA…PKEE and VKFS…DNHS. GTP contacts are provided by residues 10–17, 57–61, 119–122, 182–189, 229–233, and 294–297; these read GRPNVGKS, DTGGI, NKVD, DTAGM, and NKWD. Positions 352-436 constitute a KH-like domain; it reads LRVQSSMLND…PIRVIARKRK (85 aa).

This sequence belongs to the TRAFAC class TrmE-Era-EngA-EngB-Septin-like GTPase superfamily. EngA (Der) GTPase family. In terms of assembly, associates with the 50S ribosomal subunit.

Its function is as follows. GTPase that plays an essential role in the late steps of ribosome biogenesis. The protein is GTPase Der of Listeria welshimeri serovar 6b (strain ATCC 35897 / DSM 20650 / CCUG 15529 / CIP 8149 / NCTC 11857 / SLCC 5334 / V8).